The chain runs to 1070 residues: Carbamoyl phosphate synthase large chain (1070 aa).

A carboxyphosphate synthetic domain region spans residues 1 to 401 (MPKRDDIKTI…ALLKAVRSLE (401 aa)). Positions 129, 169, 175, 176, 208, 210, 215, 241, 242, 243, 284, and 298 each coordinate ATP. The ATP-grasp 1 domain occupies 133–327 (RDLMNELGEP…IAKLAAKIAV (195 aa)). Mg(2+) is bound by residues glutamine 284, glutamate 298, and asparagine 300. Mn(2+) contacts are provided by glutamine 284, glutamate 298, and asparagine 300. Positions 402–546 (IGADHLLLEE…YSTYEDENES (145 aa)) are oligomerization domain. The carbamoyl phosphate synthetic domain stretch occupies residues 547-929 (IRSSKESVIV…ALYKGFVASG (383 aa)). The region spanning 671–861 (EKALEILQIP…MANVATRVIL (191 aa)) is the ATP-grasp 2 domain. The ATP site is built by arginine 707, arginine 746, valine 748, glutamate 752, glycine 777, valine 778, histidine 779, serine 780, glutamine 820, and glutamate 832. Glutamine 820, glutamate 832, and asparagine 834 together coordinate Mg(2+). Mn(2+) contacts are provided by glutamine 820, glutamate 832, and asparagine 834. The MGS-like domain occupies 930–1070 (TTMHDYGTVL…SEVKQPKARV (141 aa)). The segment at 930-1070 (TTMHDYGTVL…SEVKQPKARV (141 aa)) is allosteric domain.

It belongs to the CarB family. As to quaternary structure, composed of two chains; the small (or glutamine) chain promotes the hydrolysis of glutamine to ammonia, which is used by the large (or ammonia) chain to synthesize carbamoyl phosphate. Tetramer of heterodimers (alpha,beta)4. The cofactor is Mg(2+). Requires Mn(2+) as cofactor.

It catalyses the reaction hydrogencarbonate + L-glutamine + 2 ATP + H2O = carbamoyl phosphate + L-glutamate + 2 ADP + phosphate + 2 H(+). The catalysed reaction is hydrogencarbonate + NH4(+) + 2 ATP = carbamoyl phosphate + 2 ADP + phosphate + 2 H(+). Its pathway is amino-acid biosynthesis; L-arginine biosynthesis; carbamoyl phosphate from bicarbonate: step 1/1. It participates in pyrimidine metabolism; UMP biosynthesis via de novo pathway; (S)-dihydroorotate from bicarbonate: step 1/3. Functionally, large subunit of the glutamine-dependent carbamoyl phosphate synthetase (CPSase). CPSase catalyzes the formation of carbamoyl phosphate from the ammonia moiety of glutamine, carbonate, and phosphate donated by ATP, constituting the first step of 2 biosynthetic pathways, one leading to arginine and/or urea and the other to pyrimidine nucleotides. The large subunit (synthetase) binds the substrates ammonia (free or transferred from glutamine from the small subunit), hydrogencarbonate and ATP and carries out an ATP-coupled ligase reaction, activating hydrogencarbonate by forming carboxy phosphate which reacts with ammonia to form carbamoyl phosphate. The protein is Carbamoyl phosphate synthase large chain of Listeria innocua serovar 6a (strain ATCC BAA-680 / CLIP 11262).